Here is a 370-residue protein sequence, read N- to C-terminus: MISTTDYPTVETTTTAEELYAEYISAPASSMSPAAIAEHLQQNQITFEIPSAHDLRHIDALNSFNALLQRIGNAAVSYDPAPPSGWSPDGSISTEQLSKSVVLDLADLRDRSEESGESSWWSQIFGDADMHVIINYLWIGVVSSLVILSLVFILFSCYFYRKFRTWKKCNKDIRAQIHAASDSYSSHLVGCDASRLLLHQQMQHPHHRSSEAGFYQIESPPCYTIATGLPSYDEALHHQPRHFAYGMKFVYPSLAAVHHHHHCISNWEKQEPLNKLQKCKLSAAAAVEEDKADSSSSTSASASPSSSESSNLATATPAICINMPSGRQDEEVDNSDSDSAIAVAVAVAQSLQPAAPADDDCASLVVVVAA.

The Extracellular segment spans residues 1–136; sequence MISTTDYPTV…DADMHVIINY (136 aa). The required for vesicular localization stretch occupies residues 108 to 131; the sequence is LRDRSEESGESSWWSQIFGDADMH. Residues 137–157 traverse the membrane as a helical segment; the sequence is LWIGVVSSLVILSLVFILFSC. At 158 to 370 the chain is on the cytoplasmic side; it reads YFYRKFRTWK…CASLVVVVAA (213 aa). Short sequence motifs (PY-motif) lie at residues 220–223 and 229–232; these read PPCY and LPSY. The interval 227–237 is interaction with Nedd4; it reads TGLPSYDEALH. The disordered stretch occupies residues 287–312; it reads VEEDKADSSSSTSASASPSSSESSNL. Over residues 294–312 the composition is skewed to low complexity; sequence SSSSTSASASPSSSESSNL.

The protein belongs to the commissureless family. In terms of assembly, interacts (probably via PY-motifs) with Nedd4 (via WW2 domain). Interacts with Robo. Post-translationally, ubiquitinated by Nedd4; which promotes endocytosis of the comm/robo complex and comm proteasomal degradation. Not ubiquitinated by Nedd4.

The protein localises to the cytoplasmic vesicle membrane. It is found in the cell membrane. Functionally, controls axon guidance across the CNS midline by preventing the delivery of Robo to the growth cone. The polypeptide is Protein commissureless 1 (Drosophila melanogaster (Fruit fly)).